Reading from the N-terminus, the 137-residue chain is Large ribosomal subunit protein uL16 (137 aa).

The disordered stretch occupies residues 1–20; sequence MLQPSNRKYRKDFKGRNRGV. Basic residues predominate over residues 7-17; sequence RKYRKDFKGRN.

This sequence belongs to the universal ribosomal protein uL16 family. As to quaternary structure, part of the 50S ribosomal subunit.

Binds 23S rRNA and is also seen to make contacts with the A and possibly P site tRNAs. This chain is Large ribosomal subunit protein uL16, found in Coxiella burnetii (strain CbuK_Q154) (Coxiella burnetii (strain Q154)).